The following is a 284-amino-acid chain: uncharacterized protein (284 aa).

The helical transmembrane segment at 12 to 32 (ILFILFVVAFCVYLVPRVAIN) threads the bilayer.

The protein belongs to the serine esterase family.

The protein resides in the membrane. This is an uncharacterized protein from Escherichia coli O157:H7.